Reading from the N-terminus, the 164-residue chain is 3-hydroxyacyl-[acyl-carrier-protein] dehydratase FabZ (164 aa).

The active site involves H61.

The protein belongs to the thioester dehydratase family. FabZ subfamily.

It localises to the cytoplasm. It catalyses the reaction a (3R)-hydroxyacyl-[ACP] = a (2E)-enoyl-[ACP] + H2O. In terms of biological role, involved in unsaturated fatty acids biosynthesis. Catalyzes the dehydration of short chain beta-hydroxyacyl-ACPs and long chain saturated and unsaturated beta-hydroxyacyl-ACPs. In Ralstonia nicotianae (strain ATCC BAA-1114 / GMI1000) (Ralstonia solanacearum), this protein is 3-hydroxyacyl-[acyl-carrier-protein] dehydratase FabZ.